The primary structure comprises 252 residues: Floral homeotic protein AGAMOUS (252 aa).

Residues 1–20 (MAYQSELGGDSSPLRKSGRG) form a disordered region. The region spanning 19–73 (RGKIEIKRIENTTNRQVTFCKRRNGLLKKAYELSVLCDAEVALIVFSSRGRLYEY) is the MADS-box domain. A coiled-coil region spans residues 99–166 (AEINAQYYQQ…KKNELLFSEI (68 aa)). The 91-residue stretch at 103–193 (AQYYQQESAK…RAKIAENERN (91 aa)) folds into the K-box domain.

Homodimer, capable of binding to CArG-box sequences. Forms a heterodimer via the K-box domain with either SEPALATTA1/AGL2, SEPALATTA2/AGL4, SEPALLATA3/AGL9 or AGL6. Heterodimerization also seen with some other Agamous-like MADS-box proteins. Interacts with AGL15 and AGL16. Component of a complex made of FLOR1, VSP1 and AGAMOUS (AG). Binds directly with FLR1. Detected early in the floral meristem but mostly expressed in stamen and carpel primordia.

The protein resides in the nucleus. In terms of biological role, probable transcription factor involved in the control of organ identity during the early development of flowers. Is required for normal development of stamens and carpels in the wild-type flower. Plays a role in maintaining the determinacy of the floral meristem. Acts as C class cadastral protein by repressing the A class floral homeotic genes like APETALA1. Forms a heterodimer via the K-box domain with either SEPALATTA1/AGL2, SEPALATTA2/AGL4, SEPALLATA3/AGL9 or AGL6 that could be involved in genes regulation during floral meristem development. Controls AHL21/GIK, a multifunctional chromatin modifier in reproductive organ patterning and differentiation. Induces microsporogenesis through the activation of SPL/NZZ. The chain is Floral homeotic protein AGAMOUS (AG) from Arabidopsis thaliana (Mouse-ear cress).